An 89-amino-acid polypeptide reads, in one-letter code: Small ribosomal subunit protein bS20 (89 aa).

This sequence belongs to the bacterial ribosomal protein bS20 family.

Binds directly to 16S ribosomal RNA. In Wolbachia pipientis wMel, this protein is Small ribosomal subunit protein bS20.